A 190-amino-acid polypeptide reads, in one-letter code: Prostaglandin-H2 D-isomerase (190 aa).

The signal sequence occupies residues 1–22 (MATHHTLWMGLALLGVLGDLQA). An O-linked (GalNAc...) serine glycan is attached at serine 29. Residue asparagine 51 is glycosylated (N-linked (GlcNAc...) (complex) asparagine). Residue cysteine 65 is the Nucleophile of the active site. N-linked (GlcNAc...) (complex) asparagine glycosylation occurs at asparagine 78. An intrachain disulfide couples cysteine 89 to cysteine 186.

The protein belongs to the calycin superfamily. Lipocalin family. Monomer. In terms of processing, N- and O-glycosylated. Both N-glycosylation recognition sites are almost quantitatively occupied by N-glycans of the biantennary complex type, with a considerable proportion of structures bearing a bisecting GlcNAc. N-glycan at Asn-78: dHex1Hex5HexNAc4. Agalacto structure as well as sialylated and nonsialylated oligosaccharides bearing alpha2-3- and/or alpha2-6-linked NeuNAc are present. As to expression, abundant in the brain and CNS, where it is expressed in tissues of the blood-brain barrier and secreted into the cerebro-spinal fluid. Abundantly expressed in the heart. In the male reproductive system, it is expressed in the testis, epididymis and prostate, and is secreted into the seminal fluid. Expressed in the eye and secreted into the aqueous humor. Lower levels detected in various tissue fluids such as serum, normal urine, ascitic fluid and tear fluid. Also found in a number of other organs including ovary, fimbriae of the fallopian tubes, kidney, leukocytes.

The protein resides in the rough endoplasmic reticulum. Its subcellular location is the nucleus membrane. It is found in the golgi apparatus. The protein localises to the cytoplasm. It localises to the perinuclear region. The protein resides in the secreted. The catalysed reaction is prostaglandin H2 = prostaglandin D2. Functionally, catalyzes the conversion of PGH2 to PGD2, a prostaglandin involved in smooth muscle contraction/relaxation and a potent inhibitor of platelet aggregation. Involved in a variety of CNS functions, such as sedation, NREM sleep and PGE2-induced allodynia, and may have an anti-apoptotic role in oligodendrocytes. Binds small non-substrate lipophilic molecules, including biliverdin, bilirubin, retinal, retinoic acid and thyroid hormone, and may act as a scavenger for harmful hydrophobic molecules and as a secretory retinoid and thyroid hormone transporter. Possibly involved in development and maintenance of the blood-brain, blood-retina, blood-aqueous humor and blood-testis barrier. It is likely to play important roles in both maturation and maintenance of the central nervous system and male reproductive system. Involved in PLA2G3-dependent maturation of mast cells. PLA2G3 is secreted by immature mast cells and acts on nearby fibroblasts upstream to PTDGS to synthesize PGD2, which in turn promotes mast cell maturation and degranulation via PTGDR. The chain is Prostaglandin-H2 D-isomerase (PTGDS) from Homo sapiens (Human).